We begin with the raw amino-acid sequence, 425 residues long: (S)-6-hydroxynicotine oxidase (425 aa).

FAD-binding positions include Ser12, Glu31, 38 to 39 (GR), and 56 to 59 (GGAY). Position 166 (Asn166) interacts with (S)-6-hydroxynicotine. Residue Val226 participates in FAD binding. Tyr311, Phe326, and Trp371 together coordinate (S)-6-hydroxynicotine. Residues Ser398 and 406–408 (GYI) each bind FAD. Tyr407 serves as a coordination point for (S)-6-hydroxynicotine.

The protein belongs to the flavin monoamine oxidase family. As to quaternary structure, homodimer. FAD serves as cofactor.

It localises to the cytoplasm. The enzyme catalyses (S)-6-hydroxynicotine + O2 + H2O = 6-hydroxypseudooxynicotine + H2O2. It carries out the reaction (S)-6-hydroxynicotine + O2 = 6-hydroxy-N-methylmyosmine + H2O2. Its pathway is alkaloid degradation; nicotine degradation; 6-hydroxypseudooxynicotine from nicotine (S-isomer route): step 2/2. With respect to regulation, inhibited by (R)-6-hydroxynicotine. Inhibited by high concentrations of phenanthroline. Activity is strongly affected by Hg(2+) and p-chloromercuriphenylsulfonate, but not by N-ethylmaleimide and 5,5'-dithiobis-(2-nitrobenzoate). Involved in the degradation of L-nicotine. Catalyzes the oxidation of (S)-6-hydroxynicotine (6-hydroxy-L-nicotine) to 6-hydroxypseudooxynicotine. Oxidation of the pyrrolidine ring of (S)-6-hydroxynicotine leads to the formation of the optically inactive 6-hydroxy-N-methylmyosmine, which hydrolyzes spontaneously to 6-hydroxypseudooxynicotine. Acts with absolute stereospecificity on the L-form of 6-hydroxynicotine. Can also use (S)-6-hydroxynornicotine. This chain is (S)-6-hydroxynicotine oxidase, found in Paenarthrobacter nicotinovorans (Arthrobacter nicotinovorans).